The chain runs to 377 residues: UDP-N,N'-diacetylbacillosamine 2-epimerase (hydrolyzing) (377 aa).

It belongs to the UDP-N-acetylglucosamine 2-epimerase family.

It catalyses the reaction UDP-N,N'-diacetylbacillosamine + H2O = 2,4-diacetamido-2,4,6-trideoxy-alpha-D-mannopyranose + UDP + H(+). Its function is as follows. Involved in biosynthesis of legionaminic acid (5,7-diamino-3,5,7,9-tetradeoxy-D-glycero-D-galacto-non-2-ulosonic acid)(Leg), a sialic acid-like derivative that is incorporated into virulence-associated cell surface glycoconjugates such as lipopolysaccharide (LPS) which could be a key determinant in the ability of L.pneumophila to inhibit the fusion of phagosomes with lysosomes. LPS contains a majority alpha2,4-linked homomer of legionaminic acid. Catalyzes the conversion of UDP-N,N'-diacetylbacillosamine (Bac2Ac4Ac) into 2,4-diacetamido-2,4,6-trideoxymannose and UDP. The protein is UDP-N,N'-diacetylbacillosamine 2-epimerase (hydrolyzing) of Legionella pneumophila subsp. pneumophila (strain Philadelphia 1 / ATCC 33152 / DSM 7513).